Consider the following 325-residue polypeptide: Eukaryotic translation initiation factor 3 subunit I (325 aa).

WD repeat units follow at residues 8–47 (GHERSITQIKYNRDGDLLFTVAKDPVVNVWYSVNGERLGT), 50–91 (GHTG…ALLQ), 144–183 (CSESKITSAVWGPLGENIIAGHENGELNHYSAKSGEIVNS), 186–225 (EHSKQINDIQTSRDMTMFVTASKDCTSKLFDSTSLEHQKT), and 283–324 (GHFG…FEFE).

This sequence belongs to the eIF-3 subunit I family. In terms of assembly, component of the eukaryotic translation initiation factor 3 (eIF-3) complex, which is composed of 13 subunits: eif3a, eif3b, eif3c, eif3d, eif3e, eif3f, eif3g, eif3h, eif3i, eif3j, eif3k, eif3l and eif3m.

It is found in the cytoplasm. Component of the eukaryotic translation initiation factor 3 (eIF-3) complex, which is involved in protein synthesis of a specialized repertoire of mRNAs and, together with other initiation factors, stimulates binding of mRNA and methionyl-tRNAi to the 40S ribosome. The eIF-3 complex specifically targets and initiates translation of a subset of mRNAs involved in cell proliferation. The chain is Eukaryotic translation initiation factor 3 subunit I (eif3i) from Xenopus laevis (African clawed frog).